Consider the following 340-residue polypeptide: Putative pyridoxal kinase C18.10 (340 aa).

Residues Ser19 and Tyr130 each coordinate substrate. ATP contacts are provided by residues 189–190 and 218–230; these read TS and QFPS…TGTG. Asp231 provides a ligand contact to substrate.

This sequence belongs to the pyridoxine kinase family. The cofactor is a divalent metal cation.

It localises to the cytoplasm. Its subcellular location is the nucleus. The enzyme catalyses pyridoxal + ATP = pyridoxal 5'-phosphate + ADP + H(+). Required for synthesis of pyridoxal-5-phosphate from vitamin B6. This chain is Putative pyridoxal kinase C18.10, found in Schizosaccharomyces pombe (strain 972 / ATCC 24843) (Fission yeast).